The chain runs to 132 residues: Small ribosomal subunit protein uS8 (132 aa).

The protein belongs to the universal ribosomal protein uS8 family. Part of the 30S ribosomal subunit. Contacts proteins S5 and S12.

Functionally, one of the primary rRNA binding proteins, it binds directly to 16S rRNA central domain where it helps coordinate assembly of the platform of the 30S subunit. This chain is Small ribosomal subunit protein uS8, found in Psychrobacter arcticus (strain DSM 17307 / VKM B-2377 / 273-4).